A 254-amino-acid chain; its full sequence is Triosephosphate isomerase (254 aa).

Position 10–12 (10–12 (NWK)) interacts with substrate. His-99 (electrophile) is an active-site residue. Glu-169 functions as the Proton acceptor in the catalytic mechanism. Residues Gly-175, Ser-215, and 236 to 237 (GG) each bind substrate.

It belongs to the triosephosphate isomerase family. As to quaternary structure, homodimer.

It localises to the cytoplasm. The catalysed reaction is D-glyceraldehyde 3-phosphate = dihydroxyacetone phosphate. Its pathway is carbohydrate biosynthesis; gluconeogenesis. It functions in the pathway carbohydrate degradation; glycolysis; D-glyceraldehyde 3-phosphate from glycerone phosphate: step 1/1. Involved in the gluconeogenesis. Catalyzes stereospecifically the conversion of dihydroxyacetone phosphate (DHAP) to D-glyceraldehyde-3-phosphate (G3P). The polypeptide is Triosephosphate isomerase (Chlamydia felis (strain Fe/C-56) (Chlamydophila felis)).